Here is a 156-residue protein sequence, read N- to C-terminus: ATP synthase subunit b (156 aa).

The helical transmembrane segment at 11–31 (AIAFILFVAFCMKYVWPPLMA) threads the bilayer.

This sequence belongs to the ATPase B chain family. In terms of assembly, F-type ATPases have 2 components, F(1) - the catalytic core - and F(0) - the membrane proton channel. F(1) has five subunits: alpha(3), beta(3), gamma(1), delta(1), epsilon(1). F(0) has three main subunits: a(1), b(2) and c(10-14). The alpha and beta chains form an alternating ring which encloses part of the gamma chain. F(1) is attached to F(0) by a central stalk formed by the gamma and epsilon chains, while a peripheral stalk is formed by the delta and b chains.

The protein resides in the cell inner membrane. In terms of biological role, f(1)F(0) ATP synthase produces ATP from ADP in the presence of a proton or sodium gradient. F-type ATPases consist of two structural domains, F(1) containing the extramembraneous catalytic core and F(0) containing the membrane proton channel, linked together by a central stalk and a peripheral stalk. During catalysis, ATP synthesis in the catalytic domain of F(1) is coupled via a rotary mechanism of the central stalk subunits to proton translocation. Component of the F(0) channel, it forms part of the peripheral stalk, linking F(1) to F(0). In Erwinia tasmaniensis (strain DSM 17950 / CFBP 7177 / CIP 109463 / NCPPB 4357 / Et1/99), this protein is ATP synthase subunit b.